The chain runs to 88 residues: Defensin-like protein 24 (88 aa).

An N-terminal signal peptide occupies residues 1 to 23; it reads MASSKFVLFAILALSLLLSGTEA. 4 disulfide bridges follow: C37–C87, C47–C72, C56–C83, and C60–C85.

It belongs to the DEFL family.

It localises to the secreted. The protein is Defensin-like protein 24 of Arabidopsis thaliana (Mouse-ear cress).